A 474-amino-acid chain; its full sequence is Sensor protein CreC (474 aa).

At 1–6 (MRIGMR) the chain is on the periplasmic side. The chain crosses the membrane as a helical span at residues 7–27 (LLLGYFLLVAVAAWFVLAIFV). Residues 28–146 (KEVKPGVRRA…LQNPADPESS (119 aa)) lie on the Cytoplasmic side of the membrane. A helical transmembrane segment spans residues 147–167 (VMYVAAPIMDGSRLIGVLSVG). Over 168 to 183 (KPNAAMAPVIKRSERR) the chain is Periplasmic. Residues 184–204 (ILWASAILLGIALVIGAGMVW) form a helical membrane-spanning segment. An HAMP domain is found at 205–255 (WINRSIARLTRYADSVTDNKPVPLPDLGSSELRKLAQALESMRVKLEGKNY). The Cytoplasmic portion of the chain corresponds to 205–474 (WINRSIARLT…ASLRLHRHFT (270 aa)). Residues 262-473 (ALTHELKSPL…LASLRLHRHF (212 aa)) enclose the Histidine kinase domain. The residue at position 265 (His-265) is a Phosphohistidine; by autocatalysis.

Autophosphorylated.

It localises to the cell inner membrane. The enzyme catalyses ATP + protein L-histidine = ADP + protein N-phospho-L-histidine.. In terms of biological role, member of the two-component regulatory system CreC/CreB involved in catabolic regulation. CreC may function as a membrane-associated protein kinase that phosphorylates CreB in response to environmental signals. CreC can also phosphorylate PhoB. In Escherichia coli (strain K12), this protein is Sensor protein CreC (creC).